The following is a 447-amino-acid chain: Argininosuccinate lyase (447 aa).

This sequence belongs to the lyase 1 family. Argininosuccinate lyase subfamily.

The protein resides in the cytoplasm. It carries out the reaction 2-(N(omega)-L-arginino)succinate = fumarate + L-arginine. Its pathway is amino-acid biosynthesis; L-arginine biosynthesis; L-arginine from L-ornithine and carbamoyl phosphate: step 3/3. This is Argininosuccinate lyase from Bacteroides fragilis (strain YCH46).